The chain runs to 830 residues: MGVQLKLDPNSKNWLRQPDQQPIQDSICTLPGPGSLLKKKIRKTEFRIDNGLLGNTSPIINVESKIPFHRRANSTPEESRKRVSFSLTSNDGAKSDRSSQKSSNSRKSIRSQSRSRSSSVGSDSQASIQSGTNSEVVSDDEEDGNFASIPELHEDNEYHSNLATSSNPFSDGSSSKSASLTASSAAASPTVSFSPASTSENLTPTSSKSLASNTSLVQSFNSASRSSSISGNQYTYNLLGKSTDESPKITISAGTSMSHFPSASSKLIQMRRHAHMNSEKCDPELLSHNEYFPMMKRGFISRFLCLFVSRDANVYIGPLESSHAKPYRPFGSFVSRFTNRVASDLESQIPDALEAVLTQNNDYDFNSFLHNMGYSRCYVDENYHITIHVSSYERRVEFMLAVCEAMMLYGSPSHKIQQSLRIASRILQLPATFLYLPDCMFVYFKKLEQYSPDVFVVRVTSQTDLNRMVLVNEIFRRVMRDKLSAEDGTEVLRNITSFRPLYRDWLVAFMHGVASASILPVVYGGGWRDMLIGFVLGLLLGIFRVYINPRFFLFDSLFEVIISIILSFLGRAFGSISRYDKPVFCFAALVEGAITLILPGYVVFCGVLELQSKNIVAGGVRMLYAVIFSLFLSFGITIGSALYGWMDKDATDADTCMSIIAVSPYWYILLIPIFTLSLLIVTQSHPRQWPIQMFVACCGYVVYYFSSLHFGASQISSAIGSFAVGCLGNMYSHFIKSSSFAVVLPAIFVLVPSGFAAQGGVSAGLDTASQITSKNTTTNTTTVTTENSQNSSLEFGFTMVEIAIGIAIGFLASSLTVYPFFGYRRKNMML.

Disordered regions lie at residues 1–28 (MGVQ…DSIC), 70–147 (RRAN…GNFA), and 186–210 (AASP…SKSL). Over residues 10 to 27 (NSKNWLRQPDQQPIQDSI) the composition is skewed to polar residues. 2 stretches are compositionally biased toward low complexity: residues 100–130 (QKSS…SIQS) and 186–199 (AASP…ASTS). Residues 200–210 (ENLTPTSSKSL) are compositionally biased toward polar residues. 10 helical membrane-spanning segments follow: residues 505–525 (WLVA…VYGG), 529–549 (DMLI…YINP), 551–571 (FFLF…FLGR), 584–604 (FCFA…YVVF), 622–642 (MLYA…GSAL), 659–679 (IIAV…LSLL), 691–711 (IQMF…LHFG), 715–735 (ISSA…SHFI), 740–760 (FAVV…AQGG), and 802–822 (IAIG…PFFG).

Belongs to the ThrE exporter (TC 2.A.79) family.

The protein resides in the cell membrane. The protein localises to the cell tip. This is an uncharacterized protein from Schizosaccharomyces pombe (strain 972 / ATCC 24843) (Fission yeast).